We begin with the raw amino-acid sequence, 257 residues long: Ribonuclease HII (257 aa).

The 187-residue stretch at 71–257 folds into the RNase H type-2 domain; that stretch reads SLIAGIDEVG…TSFEPIKSML (187 aa). Residues aspartate 77, glutamate 78, and aspartate 172 each contribute to the a divalent metal cation site.

This sequence belongs to the RNase HII family. Mn(2+) is required as a cofactor. Requires Mg(2+) as cofactor.

It localises to the cytoplasm. It catalyses the reaction Endonucleolytic cleavage to 5'-phosphomonoester.. Endonuclease that specifically degrades the RNA of RNA-DNA hybrids. The protein is Ribonuclease HII of Streptococcus uberis (strain ATCC BAA-854 / 0140J).